Reading from the N-terminus, the 79-residue chain is DNA-directed RNA polymerase subunit omega (79 aa).

This sequence belongs to the RNA polymerase subunit omega family. The RNAP catalytic core consists of 2 alpha, 1 beta, 1 beta' and 1 omega subunit. When a sigma factor is associated with the core the holoenzyme is formed, which can initiate transcription.

The enzyme catalyses RNA(n) + a ribonucleoside 5'-triphosphate = RNA(n+1) + diphosphate. Functionally, promotes RNA polymerase assembly. Latches the N- and C-terminal regions of the beta' subunit thereby facilitating its interaction with the beta and alpha subunits. The sequence is that of DNA-directed RNA polymerase subunit omega from Thermotoga neapolitana (strain ATCC 49049 / DSM 4359 / NBRC 107923 / NS-E).